Here is a 102-residue protein sequence, read N- to C-terminus: Large ribosomal subunit protein bL21 (102 aa).

It belongs to the bacterial ribosomal protein bL21 family. In terms of assembly, part of the 50S ribosomal subunit. Contacts protein L20.

In terms of biological role, this protein binds to 23S rRNA in the presence of protein L20. This Citrifermentans bemidjiense (strain ATCC BAA-1014 / DSM 16622 / JCM 12645 / Bem) (Geobacter bemidjiensis) protein is Large ribosomal subunit protein bL21.